A 612-amino-acid polypeptide reads, in one-letter code: Proline-rich protein 14 (612 aa).

Position 1 is an N-acetylmethionine (M1). Polar residues-rich tracts occupy residues 1-15 (MDLPGNSSPFTQPSL) and 86-96 (VCTQSPALPSQ). 4 disordered regions span residues 1–48 (MDLP…EKAS), 65–96 (VPLTHKEDTPSPLTHNHHQDPVCTQSPALPSQ), 119–150 (RARQSSPALRMRSRAASGPEESPSKKTDQVPQ), and 206–256 (PTLT…PALE). The sufficient for heterochromatin association in interphase and chromatin association in anaphase stretch occupies residues 1 to 135 (MDLPGNSSPF…ALRMRSRAAS (135 aa)). The required for the interaction with GRB2 and sufficient to promote the phosphorylation of AKT and cell proliferation stretch occupies residues 85–405 (PVCTQSPALP…MARTPPPPRP (321 aa)). A required for nuclear lamina association region spans residues 136 to 392 (GPEESPSKKT…QSRPRRHTVG (257 aa)). Positions 243-252 (ADPPESPVPD) are enriched in pro residues. Phosphoserine is present on S307. Disordered stretches follow at residues 323–405 (QSRA…PPRP), 444–463 (LGSTKGKELRASKDKVFSDP), and 553–583 (DSSLPRSRRPSRGVRTAASRTLTPNLAPSQD). Over residues 342 to 359 (WRTQCNSLAPVSKSSLGR) the composition is skewed to polar residues. The span at 366 to 379 (LGPPDPGSWPPVPS) shows a compositional bias: pro residues. The span at 448–463 (KGKELRASKDKVFSDP) shows a compositional bias: basic and acidic residues. Positions 546–563 (RRAVEFRDSSLPRSRRPS) are required for nuclear localization. Polar residues predominate over residues 570–583 (ASRTLTPNLAPSQD).

Interacts (via proline-rich region) with GRB2 (via SH3 domain 2). Interacts (via N-terminus) with CBX5.

The protein localises to the chromosome. It localises to the nucleus. The protein resides in the nucleus lamina. It is found in the nucleoplasm. Functions in tethering peripheral heterochromatin to the nuclear lamina during interphase, possibly through the interaction with heterochromatin protein CBX5/HP1 alpha. Might play a role in reattaching heterochromatin to the nuclear lamina at mitotic exit. Promotes myoblast differentiation during skeletal myogenesis, possibly by stimulating transcription factor MyoD activity via binding to CBX5/HP1 alpha. Involved in the positive regulation of the PI3K-Akt-mTOR signaling pathway and in promoting cell proliferation, possibly via binding to GRB2. The protein is Proline-rich protein 14 (Prr14) of Mus musculus (Mouse).